The chain runs to 482 residues: Glutamate--tRNA ligase 2 (482 aa).

Residues Pro16–Asn26 carry the 'HIGH' region motif. The Zn(2+) site is built by Cys113, Cys115, Cys140, and His142. The 'KMSKS' region signature appears at Pro257–Arg261. Lys260 contacts ATP.

This sequence belongs to the class-I aminoacyl-tRNA synthetase family. Glutamate--tRNA ligase type 1 subfamily. In terms of assembly, monomer. The cofactor is Zn(2+).

The protein localises to the cytoplasm. It carries out the reaction tRNA(Glu) + L-glutamate + ATP = L-glutamyl-tRNA(Glu) + AMP + diphosphate. Its function is as follows. Catalyzes the attachment of glutamate to tRNA(Glu) in a two-step reaction: glutamate is first activated by ATP to form Glu-AMP and then transferred to the acceptor end of tRNA(Glu). The protein is Glutamate--tRNA ligase 2 of Acidithiobacillus ferrooxidans (strain ATCC 53993 / BNL-5-31) (Leptospirillum ferrooxidans (ATCC 53993)).